We begin with the raw amino-acid sequence, 164 residues long: Ribosome maturation factor RimP (164 aa).

Belongs to the RimP family.

It is found in the cytoplasm. In terms of biological role, required for maturation of 30S ribosomal subunits. This is Ribosome maturation factor RimP from Mycoplasma mycoides subsp. mycoides SC (strain CCUG 32753 / NCTC 10114 / PG1).